We begin with the raw amino-acid sequence, 24 residues long: Formate ester dehydrogenase gamma chain (24 aa).

As to quaternary structure, heterotrimer composed of an alpha, a beta and a gamma chain.

The chain is Formate ester dehydrogenase gamma chain from Amycolatopsis methanolica.